Consider the following 234-residue polypeptide: (5-formylfuran-3-yl)methyl phosphate synthase (234 aa).

Lys-27 (schiff-base intermediate with substrate) is an active-site residue. Lys-85 serves as the catalytic Proton acceptor.

It belongs to the MfnB family.

The enzyme catalyses 2 D-glyceraldehyde 3-phosphate = 4-(hydroxymethyl)-2-furancarboxaldehyde phosphate + phosphate + 2 H2O. It functions in the pathway cofactor biosynthesis; methanofuran biosynthesis. Functionally, catalyzes the formation of 4-(hydroxymethyl)-2-furancarboxaldehyde phosphate (4-HFC-P) from two molecules of glyceraldehyde-3-P (GA-3-P). The chain is (5-formylfuran-3-yl)methyl phosphate synthase from Methanosarcina mazei (strain ATCC BAA-159 / DSM 3647 / Goe1 / Go1 / JCM 11833 / OCM 88) (Methanosarcina frisia).